The primary structure comprises 272 residues: HTH-type transcriptional repressor AllR (272 aa).

The interval 1–20 (MTEVRRRGRPGQAEPTAQKG) is disordered. The HTH iclR-type domain occupies 21–83 (AQALERGIAI…SQLGWWHIGL (63 aa)). Positions 43-62 (VSDISGSLDLPLSTTFRLLK) form a DNA-binding region, H-T-H motif. The IclR-ED domain occupies 98 to 267 (VLSVAGPFMH…AKDISTALGL (170 aa)). Glyoxylate-binding positions include 154–156 (SGA), Asp207, Cys217, and 234–236 (SIS).

Negative regulator of allantoin and glyoxylate utilization operons. Binds to the gcl promoter and to the allS-allA intergenic region. This Salmonella typhi protein is HTH-type transcriptional repressor AllR (allR).